The following is a 134-amino-acid chain: Putative nickel-responsive regulator (134 aa).

Ni(2+)-binding residues include H78, H89, H91, and C97.

It belongs to the transcriptional regulatory CopG/NikR family. The cofactor is Ni(2+).

Functionally, transcriptional regulator. The polypeptide is Putative nickel-responsive regulator (Chlorobium limicola (strain DSM 245 / NBRC 103803 / 6330)).